A 461-amino-acid chain; its full sequence is Peptidyl-prolyl cis-trans isomerase-like 4 (461 aa).

A PPIase cyclophilin-type domain is found at 1-171 (MSVLLETSLG…KDIRIRHTVI (171 aa)). One can recognise an RRM domain in the interval 248–326 (NVLFVCKLNP…HRIHVDFSQS (79 aa)). Residues 372–461 (NYNMVFDKND…DDRYRDRRRR (90 aa)) are disordered. 2 stretches are compositionally biased toward basic and acidic residues: residues 378–392 (DKND…ERSY) and 400–461 (NYRD…RRRR).

This sequence belongs to the cyclophilin-type PPIase family. PPIL4 subfamily.

It localises to the nucleus. It carries out the reaction [protein]-peptidylproline (omega=180) = [protein]-peptidylproline (omega=0). Functionally, PPIases accelerate the folding of proteins. It catalyzes the cis-trans isomerization of proline imidic peptide bonds in oligopeptides. This chain is Peptidyl-prolyl cis-trans isomerase-like 4 (cyp6), found in Emericella nidulans (strain FGSC A4 / ATCC 38163 / CBS 112.46 / NRRL 194 / M139) (Aspergillus nidulans).